We begin with the raw amino-acid sequence, 315 residues long: Lipoyl synthase (315 aa).

Positions 63, 68, 74, 89, 93, 96, and 303 each coordinate [4Fe-4S] cluster. The Radical SAM core domain occupies 75–292 (FSKGTATFMI…EEKAYEMGFV (218 aa)).

The protein belongs to the radical SAM superfamily. Lipoyl synthase family. [4Fe-4S] cluster serves as cofactor.

It localises to the cytoplasm. It catalyses the reaction [[Fe-S] cluster scaffold protein carrying a second [4Fe-4S](2+) cluster] + N(6)-octanoyl-L-lysyl-[protein] + 2 oxidized [2Fe-2S]-[ferredoxin] + 2 S-adenosyl-L-methionine + 4 H(+) = [[Fe-S] cluster scaffold protein] + N(6)-[(R)-dihydrolipoyl]-L-lysyl-[protein] + 4 Fe(3+) + 2 hydrogen sulfide + 2 5'-deoxyadenosine + 2 L-methionine + 2 reduced [2Fe-2S]-[ferredoxin]. It functions in the pathway protein modification; protein lipoylation via endogenous pathway; protein N(6)-(lipoyl)lysine from octanoyl-[acyl-carrier-protein]: step 2/2. In terms of biological role, catalyzes the radical-mediated insertion of two sulfur atoms into the C-6 and C-8 positions of the octanoyl moiety bound to the lipoyl domains of lipoate-dependent enzymes, thereby converting the octanoylated domains into lipoylated derivatives. The protein is Lipoyl synthase of Chromobacterium violaceum (strain ATCC 12472 / DSM 30191 / JCM 1249 / CCUG 213 / NBRC 12614 / NCIMB 9131 / NCTC 9757 / MK).